A 298-amino-acid chain; its full sequence is Probable endonuclease 4 (298 aa).

Zn(2+) is bound by residues His-69, His-111, Glu-146, Asp-180, His-183, His-215, Asp-228, His-230, and Glu-260.

This sequence belongs to the AP endonuclease 2 family. Requires Zn(2+) as cofactor.

It carries out the reaction Endonucleolytic cleavage to 5'-phosphooligonucleotide end-products.. Its function is as follows. Endonuclease IV plays a role in DNA repair. It cleaves phosphodiester bonds at apurinic or apyrimidinic (AP) sites, generating a 3'-hydroxyl group and a 5'-terminal sugar phosphate. The chain is Probable endonuclease 4 from Bacillus mycoides (strain KBAB4) (Bacillus weihenstephanensis).